The sequence spans 402 residues: MASIIARVGNSRRLNAPLPPWAHSMLRSLGRSLGPIMASMADRNMKLFSGRVVPAQGEETFENWLTQVNGVLPDWNMSEEEKLKRLMKTLRGPAREVMRVLQATNPNLSVADFLRAMKLVFGESESSVTAHGKFFNTLQAQGEKASLYVIRLEVQLQNAIQAGIIAEKDANRTRLQQLLLGGELSRDLRLRLKDFLRMYANEQERLPNFLELIRMVREEEDWDDAFIKRKRPKRSESMVERAVSPVAFQGSPPIVIGSADCNVIEIDDTLDDSDEDVILVESQDPPLPSWGAPPLRDRARPQDEVLVIDSPHNSRAQFPSTSGGSGYKNNGPGEMRRARKRKHTIRCSYCGEEGHSKETCDNESDKAQVFENLIITLQELTHTEMERSRVAPGEYNDFSEPL.

The interval 308 to 341 is disordered; sequence IDSPHNSRAQFPSTSGGSGYKNNGPGEMRRARKR. A compositionally biased stretch (polar residues) spans 311 to 322; that stretch reads PHNSRAQFPSTS. A CCHC-type zinc finger spans residues 345-362; that stretch reads IRCSYCGEEGHSKETCDN.

It belongs to the ZCCHC12 family. Interacts with SMAD1 and CREB-binding protein (CBP). Forms a protein-DNA complex through its association with SMAD1.

In terms of biological role, transcriptional coactivator in the bone morphogenetic protein (BMP)-signaling pathway. It positively modulates BMP signaling by interacting with SMAD1 and associating with CBP in the transcription complex. It contributes to the BMP-induced enhancement of cholinergic-neuron-specific gene expression. The sequence is that of Zinc finger CCHC domain-containing protein 12 (ZCCHC12) from Homo sapiens (Human).